Here is a 230-residue protein sequence, read N- to C-terminus: 7-cyano-7-deazaguanine synthase (230 aa).

7–17 is an ATP binding site; it reads CSGGLDSVSLA. Zn(2+) contacts are provided by cysteine 185, cysteine 193, cysteine 196, and cysteine 199.

It belongs to the QueC family. Requires Zn(2+) as cofactor.

The catalysed reaction is 7-carboxy-7-deazaguanine + NH4(+) + ATP = 7-cyano-7-deazaguanine + ADP + phosphate + H2O + H(+). Its pathway is purine metabolism; 7-cyano-7-deazaguanine biosynthesis. Functionally, catalyzes the ATP-dependent conversion of 7-carboxy-7-deazaguanine (CDG) to 7-cyano-7-deazaguanine (preQ(0)). This is 7-cyano-7-deazaguanine synthase from Ruegeria pomeroyi (strain ATCC 700808 / DSM 15171 / DSS-3) (Silicibacter pomeroyi).